The sequence spans 435 residues: Rho GTPase-activating protein 4 (435 aa).

A disordered region spans residues 1-59 (MAKVLKSSQSCHFPSPSSSSSTSCGGGNDGSNRDPHSPFNISRREEEEEEEERSEKERE). A compositionally biased stretch (low complexity) spans 7–23 (SSQSCHFPSPSSSSSTS). A CRIB domain is found at 93–106 (IGVPTDVRHVAHVT). The Rho-GAP domain maps to 138-319 (VSTESMQLSY…LIVKTLKDRK (182 aa)). The interval 321–343 (SRDKLVPASNPSPRDHNGDQSSS) is disordered.

Its function is as follows. Acts as a GTPase activator for the Rac-type GTPase by converting it to an inactive GDP-bound state. Acts as a negative feedback regulator in tolerance to oxygen deprivation which requires ARAC4/ROP2. The polypeptide is Rho GTPase-activating protein 4 (ROPGAP4) (Arabidopsis thaliana (Mouse-ear cress)).